The primary structure comprises 528 residues: GMP synthase [glutamine-hydrolyzing] (528 aa).

The Glutamine amidotransferase type-1 domain occupies 13 to 204; sequence AIVILDFGSQ…VYHICGCEPD (192 aa). The Nucleophile role is filled by Cys90. Catalysis depends on residues His178 and Glu180. The GMPS ATP-PPase domain maps to 205 to 403; it reads WTTSAFIDEA…LGLPEEIVRR (199 aa). Residue 232–238 participates in ATP binding; that stretch reads SGGVDSS.

In terms of assembly, homodimer.

It carries out the reaction XMP + L-glutamine + ATP + H2O = GMP + L-glutamate + AMP + diphosphate + 2 H(+). It participates in purine metabolism; GMP biosynthesis; GMP from XMP (L-Gln route): step 1/1. Catalyzes the synthesis of GMP from XMP. In Parasynechococcus marenigrum (strain WH8102), this protein is GMP synthase [glutamine-hydrolyzing].